We begin with the raw amino-acid sequence, 213 residues long: 3,4-dihydroxy-2-butanone 4-phosphate synthase (213 aa).

D-ribulose 5-phosphate-binding positions include Arg-37–Glu-38, Asp-42, Arg-150–Thr-154, and Glu-174. Glu-38 is a binding site for Mg(2+). Mg(2+) is bound at residue His-153.

This sequence belongs to the DHBP synthase family. As to quaternary structure, homodimer. Mg(2+) serves as cofactor. The cofactor is Mn(2+).

The enzyme catalyses D-ribulose 5-phosphate = (2S)-2-hydroxy-3-oxobutyl phosphate + formate + H(+). It functions in the pathway cofactor biosynthesis; riboflavin biosynthesis; 2-hydroxy-3-oxobutyl phosphate from D-ribulose 5-phosphate: step 1/1. Functionally, catalyzes the conversion of D-ribulose 5-phosphate to formate and 3,4-dihydroxy-2-butanone 4-phosphate. The protein is 3,4-dihydroxy-2-butanone 4-phosphate synthase of Buchnera aphidicola subsp. Schizaphis graminum (strain Sg).